Reading from the N-terminus, the 337-residue chain is Protein ABHD13 (337 aa).

A helical; Signal-anchor for type II membrane protein transmembrane segment spans residues 37–57; it reads FHLYGGIILLLLIFISIAGIL. Active-site charge relay system residues include Ser193, Asp268, and His298. Asn299 carries N-linked (GlcNAc...) asparagine glycosylation.

It belongs to the serine esterase family.

The protein localises to the membrane. The protein is Protein ABHD13 of Homo sapiens (Human).